A 370-amino-acid chain; its full sequence is MNRVGIDVDHMIGVLLLAVVVVFWVGASCLTNELLETNAYNKPFFLTYLNISSFALYLTPDLWRIIQSRRKSLQERTERTLPIHTQESFSEFLPLLSSTPSTSSNLSSIADTKVKDTMRLSLLFCVLWFVANLAANAALSYTTVASSTILSSTSSFFTLFLATSLGIETFSTKKLLGLFVSLFGIILIVMQSSKQQDSVSASSFLVGNTLALLGSLGYSVYTTLLKYEISSKGLRLDIQMFLGYVGIFTFLLFWPILIILDITHMETFELPSNFHISFLVMLNCIIIFVSDYFWCKALILTSPLVVTVALTFTIPLAMFADFVWREAFFTPWYIIGVIFIFVSFFLVNHRGESAVEKDCAAVEKGPILDA.

Topologically, residues 1–10 (MNRVGIDVDH) are cytoplasmic. The chain crosses the membrane as a helical span at residues 11-31 (MIGVLLLAVVVVFWVGASCLT). Over 32–42 (NELLETNAYNK) the chain is Mitochondrial intermembrane. A helical transmembrane segment spans residues 43-63 (PFFLTYLNISSFALYLTPDLW). Over 64–119 (RIIQSRRKSLQERTERTLPIHTQESFSEFLPLLSSTPSTSSNLSSIADTKVKDTMR) the chain is Cytoplasmic. The helical transmembrane segment at 120–140 (LSLLFCVLWFVANLAANAALS) threads the bilayer. Positions 129–190 (FVANLAANAA…SLFGIILIVM (62 aa)) constitute an EamA domain. Topologically, residues 141 to 146 (YTTVAS) are mitochondrial intermembrane. A helical transmembrane segment spans residues 147-167 (STILSSTSSFFTLFLATSLGI). Topologically, residues 168-169 (ET) are cytoplasmic. Residues 170–190 (FSTKKLLGLFVSLFGIILIVM) form a helical membrane-spanning segment. Topologically, residues 191–203 (QSSKQQDSVSASS) are mitochondrial intermembrane. Residues 204–224 (FLVGNTLALLGSLGYSVYTTL) traverse the membrane as a helical segment. The Cytoplasmic segment spans residues 225–239 (LKYEISSKGLRLDIQ). A helical membrane pass occupies residues 240-260 (MFLGYVGIFTFLLFWPILIIL). The Mitochondrial intermembrane segment spans residues 261-273 (DITHMETFELPSN). A helical transmembrane segment spans residues 274–294 (FHISFLVMLNCIIIFVSDYFW). Topologically, residues 295 to 303 (CKALILTSP) are cytoplasmic. A helical transmembrane segment spans residues 304–324 (LVVTVALTFTIPLAMFADFVW). Topologically, residues 325–326 (RE) are mitochondrial intermembrane. A helical membrane pass occupies residues 327–347 (AFFTPWYIIGVIFIFVSFFLV). Residues 348-370 (NHRGESAVEKDCAAVEKGPILDA) lie on the Cytoplasmic side of the membrane.

The protein localises to the mitochondrion membrane. In terms of biological role, may be involved in thiaminediphosphate transport across the mitochondrial membrane. This chain is Thiamine-repressible mitochondrial transport protein THI74 (THI74), found in Saccharomyces cerevisiae (strain ATCC 204508 / S288c) (Baker's yeast).